A 535-amino-acid polypeptide reads, in one-letter code: CTP synthase (535 aa).

An amidoligase domain region spans residues 1-267 (MTKYIFVTGG…DKLVCDHMKL (267 aa)). CTP is bound at residue S13. Position 13 (S13) interacts with UTP. 14-19 (SLGKGI) lines the ATP pocket. Y54 is a binding site for L-glutamine. Position 71 (D71) interacts with ATP. Mg(2+) contacts are provided by D71 and E141. CTP-binding positions include 148–150 (DIE), 188–193 (KTKPTQ), and K224. Residues 188-193 (KTKPTQ) and K224 contribute to the UTP site. Residues 292 to 534 (TISLVGKYVE…IGASVQAAEQ (243 aa)) enclose the Glutamine amidotransferase type-1 domain. G354 is a binding site for L-glutamine. C381 serves as the catalytic Nucleophile; for glutamine hydrolysis. Residues 382–385 (LGMQ), E405, and R462 contribute to the L-glutamine site. Active-site residues include H507 and E509.

This sequence belongs to the CTP synthase family. In terms of assembly, homotetramer.

It catalyses the reaction UTP + L-glutamine + ATP + H2O = CTP + L-glutamate + ADP + phosphate + 2 H(+). It carries out the reaction L-glutamine + H2O = L-glutamate + NH4(+). The catalysed reaction is UTP + NH4(+) + ATP = CTP + ADP + phosphate + 2 H(+). Its pathway is pyrimidine metabolism; CTP biosynthesis via de novo pathway; CTP from UDP: step 2/2. Its activity is regulated as follows. Allosterically activated by GTP, when glutamine is the substrate; GTP has no effect on the reaction when ammonia is the substrate. The allosteric effector GTP functions by stabilizing the protein conformation that binds the tetrahedral intermediate(s) formed during glutamine hydrolysis. Inhibited by the product CTP, via allosteric rather than competitive inhibition. Functionally, catalyzes the ATP-dependent amination of UTP to CTP with either L-glutamine or ammonia as the source of nitrogen. Regulates intracellular CTP levels through interactions with the four ribonucleotide triphosphates. This Bacillus velezensis (strain DSM 23117 / BGSC 10A6 / LMG 26770 / FZB42) (Bacillus amyloliquefaciens subsp. plantarum) protein is CTP synthase.